A 332-amino-acid chain; its full sequence is Large ribosomal subunit protein uL29m (332 aa).

A disordered region spans residues 19 to 40 (RFTKPKPKPAKRENVRLPTQRT). Residues 264–327 (TSENTESAIA…IQLQEEDAKN (64 aa)) are a coiled coil.

Belongs to the universal ribosomal protein uL29 family. Component of the mitochondrial large ribosomal subunit. Mature mitochondrial ribosomes consist of a small (37S) and a large (54S) subunit. The 37S subunit contains at least 33 different proteins and 1 molecule of RNA (15S). The 54S subunit contains at least 45 different proteins and 1 molecule of RNA (21S).

The protein resides in the mitochondrion. This Kluyveromyces lactis (strain ATCC 8585 / CBS 2359 / DSM 70799 / NBRC 1267 / NRRL Y-1140 / WM37) (Yeast) protein is Large ribosomal subunit protein uL29m (MRPL4).